Consider the following 299-residue polypeptide: tRNA dimethylallyltransferase (299 aa).

10–17 (GPTAVGKT) is a binding site for ATP. 12-17 (TAVGKT) is a substrate binding site. The interaction with substrate tRNA stretch occupies residues 35–38 (DSQQ).

Belongs to the IPP transferase family. In terms of assembly, monomer. Mg(2+) serves as cofactor.

The catalysed reaction is adenosine(37) in tRNA + dimethylallyl diphosphate = N(6)-dimethylallyladenosine(37) in tRNA + diphosphate. Functionally, catalyzes the transfer of a dimethylallyl group onto the adenine at position 37 in tRNAs that read codons beginning with uridine, leading to the formation of N6-(dimethylallyl)adenosine (i(6)A). This is tRNA dimethylallyltransferase from Streptococcus thermophilus (strain CNRZ 1066).